We begin with the raw amino-acid sequence, 400 residues long: Ubiquitin-like modifier-activating enzyme 5 (400 aa).

ATP is bound by residues Gly76, Asp97, Lys120, Asn143, and Asn177. Residues Cys219 and Cys222 each coordinate Zn(2+). Cys243 serves as the catalytic Glycyl thioester intermediate. 2 residues coordinate Zn(2+): Cys296 and Cys301.

Belongs to the ubiquitin-activating E1 family. UBA5 subfamily.

Functionally, E1-like enzyme which activates UFM1. The polypeptide is Ubiquitin-like modifier-activating enzyme 5 (Drosophila virilis (Fruit fly)).